Consider the following 298-residue polypeptide: Enoyl-CoA hydratase ACTT6 (298 aa).

Belongs to the enoyl-CoA hydratase/isomerase family.

It participates in mycotoxin biosynthesis. Enoyl-CoA hydratase; part of the gene clusters that mediate the biosynthesis of the host-selective toxins (HSTs) ACT-toxins responsible for brown spot of tangerine disease by the tangerine pathotype which affects tangerines and mandarins. ACT-toxins consist of three moieties, 9,10-epoxy-8-hydroxy-9-methyl-decatrienoic acid (EDA), valine and a polyketide. ACT-toxin I is toxic to both citrus and pear; toxin II the 5''-deoxy derivative of ACT-toxin I, is highly toxic to pear and slightly toxic to citrus. On cellular level, ACT-toxins affect plasma membrane of susceptible cells and cause a sudden increase in loss of K(+) after a few minutes of toxin treatment. The acyl-CoA ligase ACTT1, the hydrolase ACTT2, the enoyl-CoA hydratases ACTT3 and ACTT6, and the acyl-CoA synthetase ACTT5 are all involved in the biosynthesis of the AK-, AF- and ACT-toxin common 9,10-epoxy-8-hydroxy-9-methyl-decatrienoic acid (EDA) structural moiety. The exact role of each enzyme, and of additional enzymes identified within the AF-toxin clusters have still to be determined. On the other hand, ACTTS1 to ACTTS4 are specific to the tangerine pathotype. The function of ACTTS3 is to elongate the polyketide chain portion of ACT-toxin that is unique to this toxin. The enoyl-reductase ACTTS2 might complement the missing enoyl-reductase (ER) domain in ACTTS3 in the synthesis of the polyketide portion of ACT-toxin. The roles of the nonribosomal peptide synthetases-related proteins ACTTS1 and ACTTS4 have also still not been elucidated. This is Enoyl-CoA hydratase ACTT6 from Alternaria alternata (Alternaria rot fungus).